The chain runs to 87 residues: UPF0250 protein PC1_1177 (87 aa).

This sequence belongs to the UPF0250 family.

The sequence is that of UPF0250 protein PC1_1177 from Pectobacterium carotovorum subsp. carotovorum (strain PC1).